The chain runs to 436 residues: GTPase Der (436 aa).

EngA-type G domains follow at residues 4-167 (PTVA…PVEE) and 175-351 (IRFS…ESQN). GTP-binding positions include 10–17 (GRPNVGKS), 57–61 (DTGGI), 119–122 (NKVD), 181–188 (GRPNVGKS), 229–233 (DTAGM), and 294–297 (NKWD). The KH-like domain maps to 352–436 (KRIPSAVLND…PIHLIARKRK (85 aa)).

Belongs to the TRAFAC class TrmE-Era-EngA-EngB-Septin-like GTPase superfamily. EngA (Der) GTPase family. Associates with the 50S ribosomal subunit.

GTPase that plays an essential role in the late steps of ribosome biogenesis. The chain is GTPase Der from Streptococcus pyogenes serotype M28 (strain MGAS6180).